A 202-amino-acid polypeptide reads, in one-letter code: MQILLATVAAYLIGSVSFAVVVSAAMGLADPRSYGSKNPGATNVLRGGNKKAAILTLVGDAFKGWLAVWLVKHFGIGGEIGVALAAIAVFLGHLYPVFFRFQGGKGVATAAGVLLAVHPALGLATALTWLIIAFFFRYSSLAALVAAVFAPVFDVFLFGTRNNPVAWAVIAMSALLIWRHRSNISKLLAGEESRIGQKKTDA.

5 consecutive transmembrane segments (helical) span residues 3 to 23, 51 to 71, 74 to 94, 116 to 136, and 140 to 160; these read ILLA…VVVS, KAAI…VWLV, FGIG…LGHL, AVHP…AFFF, and SLAA…LFGT.

Belongs to the PlsY family. In terms of assembly, probably interacts with PlsX.

Its subcellular location is the cell inner membrane. The catalysed reaction is an acyl phosphate + sn-glycerol 3-phosphate = a 1-acyl-sn-glycero-3-phosphate + phosphate. It functions in the pathway lipid metabolism; phospholipid metabolism. Catalyzes the transfer of an acyl group from acyl-phosphate (acyl-PO(4)) to glycerol-3-phosphate (G3P) to form lysophosphatidic acid (LPA). This enzyme utilizes acyl-phosphate as fatty acyl donor, but not acyl-CoA or acyl-ACP. In Burkholderia thailandensis (strain ATCC 700388 / DSM 13276 / CCUG 48851 / CIP 106301 / E264), this protein is Glycerol-3-phosphate acyltransferase.